Here is a 159-residue protein sequence, read N- to C-terminus: Ribosomal RNA large subunit methyltransferase H (159 aa).

S-adenosyl-L-methionine contacts are provided by residues leucine 76, glycine 108, and 127–132; that span reads FGLLTL.

This sequence belongs to the RNA methyltransferase RlmH family. Homodimer.

It is found in the cytoplasm. It catalyses the reaction pseudouridine(1915) in 23S rRNA + S-adenosyl-L-methionine = N(3)-methylpseudouridine(1915) in 23S rRNA + S-adenosyl-L-homocysteine + H(+). Functionally, specifically methylates the pseudouridine at position 1915 (m3Psi1915) in 23S rRNA. The polypeptide is Ribosomal RNA large subunit methyltransferase H (Streptococcus pyogenes serotype M6 (strain ATCC BAA-946 / MGAS10394)).